Reading from the N-terminus, the 610-residue chain is Elongation factor 4 (610 aa).

The region spanning E11–T193 is the tr-type G domain. GTP is bound by residues D23–T28 and N140–D143.

The protein belongs to the TRAFAC class translation factor GTPase superfamily. Classic translation factor GTPase family. LepA subfamily.

Its subcellular location is the cell membrane. The enzyme catalyses GTP + H2O = GDP + phosphate + H(+). Its function is as follows. Required for accurate and efficient protein synthesis under certain stress conditions. May act as a fidelity factor of the translation reaction, by catalyzing a one-codon backward translocation of tRNAs on improperly translocated ribosomes. Back-translocation proceeds from a post-translocation (POST) complex to a pre-translocation (PRE) complex, thus giving elongation factor G a second chance to translocate the tRNAs correctly. Binds to ribosomes in a GTP-dependent manner. This is Elongation factor 4 from Streptococcus agalactiae serotype Ia (strain ATCC 27591 / A909 / CDC SS700).